The chain runs to 149 residues: Large ribosomal subunit protein bL9 (149 aa).

K89 carries the post-translational modification N6-acetyllysine.

Belongs to the bacterial ribosomal protein bL9 family.

Its function is as follows. Binds to the 23S rRNA. In Shigella boydii serotype 18 (strain CDC 3083-94 / BS512), this protein is Large ribosomal subunit protein bL9.